The sequence spans 263 residues: Meiotic drive suppressor wtf6 (263 aa).

Residues 1–68 are disordered; that stretch reads MKNNYTSLKS…REKNPSRSTD (68 aa). The segment covering 19–30 has biased composition (basic and acidic residues); the sequence is KTDHEIDLEKGP. The next 3 membrane-spanning stretches (helical) occupy residues 73–93, 110–130, and 201–221; these read FLIK…PAVC, WTLF…LTYF, and SASA…AETV.

Belongs to the WTF family. Homomer. Interacts with other proteins that exhibit high sequence similarity.

It localises to the spore membrane. The protein resides in the vacuole membrane. Functionally, acts as a suppressor component of the dual wtf meiotic drive system, and can suppress but not confer meiotic drive by compatible poisons. Wtf meiotic drive systems promote unequal transmission of alleles from the parental zygote to progeny spores by encoding a poison and an antidote from the same locus; the poison is trans-acting and forms toxic aggregates in all spores within an ascus, wherease the antidote is spore-specific and targets aggregates for degradation by the vacuole. Meiotic drive by wtf systems therefore lead to poisoning of all progeny that do not inherit the dual poison/antidote allele, or express a compatible antidote. The sequence is that of Meiotic drive suppressor wtf6 from Schizosaccharomyces kambucha (Fission yeast).